Here is a 1644-residue protein sequence, read N- to C-terminus: Terminal uridylyltransferase 4 (1644 aa).

Disordered regions lie at residues 31–63, 96–168, and 205–257; these read NQTL…QNDI, CKAK…SLLL, and ALQN…EMDY. Positions 36-46 are enriched in basic and acidic residues; it reads ARNDKSVKEIE. Ser-104 carries the post-translational modification Phosphoserine. Residues 112–125 show a composition bias toward polar residues; the sequence is TISQAKSEKATSLQ. 2 positions are modified to phosphoserine: Ser-134 and Ser-156. A compositionally biased stretch (polar residues) spans 206–222; sequence LQNSPRSQKQQTCTDNT. The segment covering 238–252 has biased composition (basic and acidic residues); it reads DLSKMKNDESNKENS. A required for interaction with LIN28A and pre-let-7 RNA region spans residues 253–333; it reads SEMDYLENAT…KEKRHKKNIL (81 aa). Zn(2+)-binding residues include Cys-306, Cys-309, His-322, and His-328. The tract at residues 579 to 617 is disordered; it reads EKNSIAEENKAKADQPKDDTKKTETDNQSNAMKEKHGKS. The segment covering 582 to 603 has biased composition (basic and acidic residues); sequence SIAEENKAKADQPKDDTKKTET. Residues 628-678 enclose the PAP-associated 1 domain; that stretch reads SLGQLWLELLKFYTLDFALEEYVICVRIQDILTRENKNWPKRRIAIEDPFS. Residues 794 to 816 are disordered; the sequence is GQDSSSLSTSKSSEIEPKLDKKQ. A compositionally biased stretch (basic and acidic residues) spans 806-816; it reads SEIEPKLDKKQ. The sufficient for monouridylation activity stretch occupies residues 901 to 1634; that stretch reads DKFILTSGKP…CATRRCRERC (734 aa). The CCHC-type 1 zinc finger occupies 913–930; the sequence is IVCSICKKDGHSKNDCPE. UTP is bound by residues 998 to 1001, 1008 to 1011, Asn-1081, Lys-1103, 1121 to 1125, and His-1237; these read SSKN, SDLD, and SYAYI. Residues Asp-1009 and Asp-1011 each contribute to the Mg(2+) site. Positions 1184–1237 constitute a PAP-associated 2 domain; that stretch reads SLGELWLGLLRFYTEEFDFKEYVISIRQKKLLTTFEKQWTSKCIAIEDPFDLNH. The segment at 1293–1310 adopts a CCHC-type 2 zinc-finger fold; the sequence is RCCRVCGKIGHYMKDCPK. A disordered region spans residues 1321–1348; it reads KDSEEEKEGNEEEKDSRDVLDPRDLHDT. The segment covering 1334–1348 has biased composition (basic and acidic residues); it reads KDSRDVLDPRDLHDT. Residues 1357–1374 form a CCHC-type 3 zinc finger; that stretch reads LRCFICGDAGHVRRECPE. Over residues 1401 to 1426 the composition is skewed to low complexity; sequence AGSAQQQGDQSIRTRQSSECSESPSY. The interval 1401–1482 is disordered; that stretch reads AGSAQQQGDQ…LYNFPQSPPA (82 aa). Over residues 1441–1452 the composition is skewed to polar residues; sequence AAITQPSSQPGS. The segment covering 1453-1470 has biased composition (low complexity); that stretch reads QPKLGPPQQGAQPPHQVQ. Omega-N-methylarginine is present on Arg-1624.

Belongs to the DNA polymerase type-B-like family. In terms of assembly, interacts with LIN28A in the presence of pre-let-7 RNA. Interacts with T2BP. Interacts with MOV10; the interaction is RNA-dependent. Mg(2+) serves as cofactor. Mn(2+) is required as a cofactor.

It localises to the nucleus. It is found in the cytoplasm. The protein localises to the cytoplasmic ribonucleoprotein granule. It catalyses the reaction RNA(n) + UTP = RNA(n)-3'-uridine ribonucleotide + diphosphate. Functionally, uridylyltransferase that mediates the terminal uridylation of mRNAs with short (less than 25 nucleotides) poly(A) tails, hence facilitating global mRNA decay. Essential for both oocyte maturation and fertility. Through 3' terminal uridylation of mRNA, sculpts, with TUT7, the maternal transcriptome by eliminating transcripts during oocyte growth. Involved in microRNA (miRNA)-induced gene silencing through uridylation of deadenylated miRNA targets. Also functions as an integral regulator of microRNA biogenesis using 3 different uridylation mechanisms. Acts as a suppressor of miRNA biogenesis by mediating the terminal uridylation of some miRNA precursors, including that of let-7 (pre-let-7), miR107, miR-143 and miR-200c. Uridylated miRNAs are not processed by Dicer and undergo degradation. Degradation of pre-let-7 contributes to the maintenance of embryonic stem (ES) cell pluripotency. Also catalyzes the 3' uridylation of miR-26A, a miRNA that targets IL6 transcript. This abrogates the silencing of IL6 transcript, hence promoting cytokine expression. In the absence of LIN28A, TUT7 and TUT4 monouridylate group II pre-miRNAs, which includes most of pre-let7 members, that shapes an optimal 3' end overhang for efficient processing. Adds oligo-U tails to truncated pre-miRNAS with a 5' overhang which may promote rapid degradation of non-functional pre-miRNA species. May also suppress Toll-like receptor-induced NF-kappa-B activation via binding to T2BP. Does not play a role in replication-dependent histone mRNA degradation. Due to functional redundancy between TUT4 and TUT7, the identification of the specific role of each of these proteins is difficult. TUT4 and TUT7 restrict retrotransposition of long interspersed element-1 (LINE-1) in cooperation with MOV10 counteracting the RNA chaperonne activity of L1RE1. TUT7 uridylates LINE-1 mRNAs in the cytoplasm which inhibits initiation of reverse transcription once in the nucleus, whereas uridylation by TUT4 destabilizes mRNAs in cytoplasmic ribonucleoprotein granules. In Homo sapiens (Human), this protein is Terminal uridylyltransferase 4.